A 130-amino-acid polypeptide reads, in one-letter code: D-ribose pyranase (130 aa).

The active-site Proton donor is His-20. Residues Asp-28, His-97, and 119–121 contribute to the substrate site; that span reads YAN.

It belongs to the RbsD / FucU family. RbsD subfamily. As to quaternary structure, homodecamer.

It localises to the cytoplasm. It carries out the reaction beta-D-ribopyranose = beta-D-ribofuranose. The protein operates within carbohydrate metabolism; D-ribose degradation; D-ribose 5-phosphate from beta-D-ribopyranose: step 1/2. Catalyzes the interconversion of beta-pyran and beta-furan forms of D-ribose. The protein is D-ribose pyranase of Paracidovorax citrulli (strain AAC00-1) (Acidovorax citrulli).